Consider the following 427-residue polypeptide: Inward rectifier potassium channel 2 (427 aa).

Over 1 to 81 (MGSVRTNRYS…IFTTCVDIRW (81 aa)) the chain is Cytoplasmic. An S-nitrosocysteine modification is found at C76. A helical transmembrane segment spans residues 82–106 (RWMLVIFCLAFVLSWLFFGCVFWLI). Over 107–128 (ALLHGDLDASKESKACVSEVNS) the chain is Extracellular. The helical; Pore-forming intramembrane region spans 129 to 140 (FTAAFLFSIETQ). Positions 141–147 (TTIGYGF) form an intramembrane region, pore-forming. The short motif at 142-147 (TIGYGF) is the Selectivity filter element. Over 148 to 156 (RCVTDECPI) the chain is Extracellular. A helical transmembrane segment spans residues 157-178 (AVFMVVFQSIVGCIIDAFIIGA). At 179–427 (VMAKMAKPKK…PRPLRRESEI (249 aa)) the chain is on the cytoplasmic side. Residues 181–208 (AKMAKPKKRNETLVFSHNAVIAMRDGKL) form a polyphosphoinositide (PIP2)-binding region. A disordered region spans residues 384–427 (SKEEDDSENGVPESTSTDTPPDIDLHNQASVPLEPRPLRRESEI). The PDZ-binding motif lies at 425–427 (SEI).

This sequence belongs to the inward rectifier-type potassium channel (TC 1.A.2.1) family. KCNJ2 subfamily. In terms of assembly, homotetramer. Homomultimeric and heteromultimeric association with KCNJ4/Kir2.3. Can form heteromeric channels with Kir2.6/KCNJ18. Associates, via its PDZ-recognition domain, with a complex containing LIN7A, LIN7B, LIN7C, DLG1, CASK and APBA1. S-nitrosylation increases the open probability and inward rectifying currents.

It is found in the cell membrane. Its subcellular location is the sarcolemma. The protein resides in the T-tubule. It carries out the reaction K(+)(in) = K(+)(out). Activated by phosphatidylinositol 4,5 biphosphate (PtdIns(4,5)P2). Its function is as follows. Inward rectifier potassium channels are characterized by a greater tendency to allow potassium to flow into the cell rather than out of it. Their voltage dependence is regulated by the concentration of extracellular potassium; as external potassium is raised, the voltage range of the channel opening shifts to more positive voltages. The inward rectification is mainly due to the blockage of outward current by internal magnesium. Blocked by external barium or cesium. Probably participates in establishing action potential waveform and excitability of neuronal and muscle tissues. This Cavia porcellus (Guinea pig) protein is Inward rectifier potassium channel 2 (KCNJ2).